A 314-amino-acid chain; its full sequence is Ribonuclease Z (314 aa).

Zn(2+)-binding residues include His62, His64, Asp66, His67, His139, Asp210, and His268. Residue Asp66 is the Proton acceptor of the active site.

This sequence belongs to the RNase Z family. As to quaternary structure, homodimer. The cofactor is Zn(2+).

It carries out the reaction Endonucleolytic cleavage of RNA, removing extra 3' nucleotides from tRNA precursor, generating 3' termini of tRNAs. A 3'-hydroxy group is left at the tRNA terminus and a 5'-phosphoryl group is left at the trailer molecule.. Its function is as follows. Zinc phosphodiesterase, which displays some tRNA 3'-processing endonuclease activity. Probably involved in tRNA maturation, by removing a 3'-trailer from precursor tRNA. The polypeptide is Ribonuclease Z (Rippkaea orientalis (strain PCC 8801 / RF-1) (Cyanothece sp. (strain PCC 8801))).